A 96-amino-acid polypeptide reads, in one-letter code: ATP synthase subunit c (96 aa).

A run of 2 helical transmembrane segments spans residues 28-50 and 75-95; these read LGAGVAMGIGAIGPGVGEGNIGA and AVTESTGLYSLVVALILLFVL.

This sequence belongs to the ATPase C chain family. F-type ATPases have 2 components, F(1) - the catalytic core - and F(0) - the membrane proton channel. F(1) has five subunits: alpha(3), beta(3), gamma(1), delta(1), epsilon(1). F(0) has three main subunits: a(1), b(2) and c(10-14). The alpha and beta chains form an alternating ring which encloses part of the gamma chain. F(1) is attached to F(0) by a central stalk formed by the gamma and epsilon chains, while a peripheral stalk is formed by the delta and b chains.

The protein resides in the cell inner membrane. F(1)F(0) ATP synthase produces ATP from ADP in the presence of a proton or sodium gradient. F-type ATPases consist of two structural domains, F(1) containing the extramembraneous catalytic core and F(0) containing the membrane proton channel, linked together by a central stalk and a peripheral stalk. During catalysis, ATP synthesis in the catalytic domain of F(1) is coupled via a rotary mechanism of the central stalk subunits to proton translocation. In terms of biological role, key component of the F(0) channel; it plays a direct role in translocation across the membrane. A homomeric c-ring of between 10-14 subunits forms the central stalk rotor element with the F(1) delta and epsilon subunits. This is ATP synthase subunit c from Petrotoga mobilis (strain DSM 10674 / SJ95).